A 544-amino-acid chain; its full sequence is Serine/threonine-protein kinase PAK 3 (544 aa).

A disordered region spans residues 1–73 (MSDSLDNEEK…EKERPEISLP (73 aa)). Residues Ser-2 and Ser-4 each carry the phosphoserine modification. Polar residues predominate over residues 18-32 (MNSNNRDSSALNHSS). Ser-50 bears the Phosphoserine; by autocatalysis mark. The segment covering 63–73 (KEKERPEISLP) has biased composition (basic and acidic residues). The interval 65–108 (KERPEISLPSDFEHTIHVGFDAVTGEFTGIPEQWARLLQTSNIT) is GTPase-binding. Residues 65-135 (KERPEISLPS…YDSKETVNNQ (71 aa)) form an autoregulatory region region. The CRIB domain maps to 70 to 83 (ISLPSDFEHTIHVG). The segment at 84-267 (FDAVTGEFTG…IVSVGDPKKK (184 aa)) is linker. Position 139 is a phosphoserine; by autocatalysis (Ser-139). Disordered stretches follow at residues 156–197 (SNTK…RPEH) and 213–248 (PAAP…KMTD). A Phosphoserine modification is found at Ser-171. Acidic residues predominate over residues 171 to 186 (SEEEDEEEEEEEDDNE). The segment covering 224 to 235 (SAENANSSTLYR) has biased composition (polar residues). Positions 268-519 (YTRFEKIGQG…AKELLQHPFL (252 aa)) constitute a Protein kinase domain. ATP-binding positions include 274-282 (IGQGASGTV) and Lys-297. Catalysis depends on Asp-387, which acts as the Proton acceptor. Residue Thr-421 is modified to Phosphothreonine; by autocatalysis.

Belongs to the protein kinase superfamily. STE Ser/Thr protein kinase family. STE20 subfamily. In terms of assembly, interacts tightly with GTP-bound but not GDP-bound CDC42/p21 and RAC1. Shows highly specific binding to the SH3 domains of phospholipase C-gamma and of adapter protein NCK. Interacts with the C-terminal of APP. Interacts with ARHGEF6 and ARHGEF7. Interacts with GIT1 and GIT2. Mg(2+) serves as cofactor. Post-translationally, autophosphorylated when activated by CDC42/p21. In terms of processing, neddylated. In terms of tissue distribution, detected at high levels in the brain and at low levels in the testis.

The protein localises to the cytoplasm. It catalyses the reaction L-seryl-[protein] + ATP = O-phospho-L-seryl-[protein] + ADP + H(+). The enzyme catalyses L-threonyl-[protein] + ATP = O-phospho-L-threonyl-[protein] + ADP + H(+). Its activity is regulated as follows. Activated by binding small G proteins. Binding of GTP-bound CDC42 or RAC1 to the autoregulatory region releases monomers from the autoinhibited dimer, enables phosphorylation of Thr-421 and allows the kinase domain to adopt an active structure. Functionally, serine/threonine protein kinase that plays a role in a variety of different signaling pathways including cytoskeleton regulation, cell migration, or cell cycle regulation. Plays a role in dendrite spine morphogenesis as well as synapse formation and plasticity. Acts as a downstream effector of the small GTPases CDC42 and RAC1. Activation by the binding of active CDC42 and RAC1 results in a conformational change and a subsequent autophosphorylation on several serine and/or threonine residues. Phosphorylates MAPK4 and MAPK6 and activates the downstream target MAPKAPK5, a regulator of F-actin polymerization and cell migration. Additionally, phosphorylates TNNI3/troponin I to modulate calcium sensitivity and relaxation kinetics of thin myofilaments. May also be involved in early neuronal development. In hippocampal neurons, necessary for the formation of dendritic spines and excitatory synapses; this function is dependent on kinase activity and may be exerted by the regulation of actomyosin contractility through the phosphorylation of myosin II regulatory light chain (MLC). This Rattus norvegicus (Rat) protein is Serine/threonine-protein kinase PAK 3 (Pak3).